We begin with the raw amino-acid sequence, 1062 residues long: Histone H3-lysine(4) N-trimethyltransferase ATX1 (1062 aa).

The segment at 159-184 (NAFSGNKQNGSSRRKGSSSKNQDKAT) is disordered. Residues 301-365 (PGDIVWAKLA…VKQAISFIKG (65 aa)) form the PWWP domain. The segment at 401 to 424 (QLQKGADSVDSDMANSTEEGNSGG) is disordered. The region spanning 441–500 (DFRHIIGDLLIINLGKVVTDSQFFKDENHIWPEGYTAMRKFTSLTDHSASALYKMEVLRD) is the FYR N-terminal domain. Residues 504-586 (KTHPLFIVTA…RPSSHVSMCK (83 aa)) form the FYR C-terminal domain. The Phorbol-ester/DAG-type zinc-finger motif lies at 591-647 (RHQNQPTGYRPVRVDWKDLDKCNVCHMDEEYENNLFLQCDKCRMMVHAKCYGELEPC). The interaction with PIP5 stretch occupies residues 599–1062 (YRPVRVDWKD…RCDLIDWTAE (464 aa)). The segment at 609-660 (LDKCNVCHMDEEYENNLFLQCDKCRMMVHAKCYGELEPCDGALWLCNLCRPG) adopts a PHD-type 1 zinc-finger fold. A C2HC pre-PHD-type zinc finger spans residues 665-698 (PPRCCLCPVVGGAMKPTTDGRWAHLACAIWIPET). The segment at 722-785 (LMCTICGVSY…RMLSFCKRHR (64 aa)) adopts a PHD-type 2 zinc-finger fold. The region spanning 898–1016 (KRLAFGKSGI…KWEELTYDYR (119 aa)) is the SET domain. H908 contributes to the S-adenosyl-L-methionine binding site. S947 carries an O-linked (GlcNAc) serine glycan. Residues Y954 and 977 to 978 (NH) contribute to the S-adenosyl-L-methionine site. Zn(2+) contacts are provided by C980, C1026, C1028, and C1033. The region spanning 1022 to 1038 (ERLSCSCGFPGCRGVVN) is the Post-SET domain.

Belongs to the class V-like SAM-binding methyltransferase superfamily. Histone-lysine methyltransferase family. TRX/MLL subfamily. As to quaternary structure, interacts with PIP5. Interacts with WDR5A. Binds to CLF in the nucleus. Interacts with NRPB1 CTD domain, especially when NRPB1 is phosphorylated on 'Ser-5' of the heptapeptide repeat. Component of a nuclear protein complex containing at least TATA binding proteins (TBPs, e.g. TBP1 and TBP2) and ATX1. Associates with ULT1 for trimethylating 'Lys-4' on histone H3 (H3K4me3) at flower MADS box gene loci. Interacts with SEC. Interacts with A4/EF1A in the cytoplasm on the nuclear periphery. In terms of processing, activated via O-glycosylation by SEC; this modification triggers FLC locus H3K4me3 histone modification, thus preventing premature flowering. In terms of tissue distribution, strongly expressed in cotyledons, but weak levels in the first true leaves, except at the hydothodes. Ubiquitous with higher levels in dividing tissues, including inflorescence meristem and flower primordia. Expressed also in leaves (especially at hydathodes), in growing inflorescence stems and in the mature flowers. Strongly expressed in young seedlings.

It is found in the nucleus. The protein resides in the cytoplasm. The protein localises to the perinuclear region. It catalyses the reaction L-lysyl(4)-[histone H3] + 3 S-adenosyl-L-methionine = N(6),N(6),N(6)-trimethyl-L-lysyl(4)-[histone H3] + 3 S-adenosyl-L-homocysteine + 3 H(+). It carries out the reaction L-lysyl-[protein] + 3 S-adenosyl-L-methionine = N(6),N(6),N(6)-trimethyl-L-lysyl-[protein] + 3 S-adenosyl-L-homocysteine + 3 H(+). Functionally, binds to the promoter and regulates the transcription of target genes, maintaining them in an active state; at promoters, required for TATA binding proteins (TBPs, e.g. TBP1 and TBP2) and RNA polymerase II (Pol II) recruitment, and, in a subsequent event, is recruited by a phosphorylated form of Pol II to the +300-bp region of transcribed sequences to trimethylates nucleosomes. Histone trimethyltransferase that trimethylates 'Lys-4' of histone H3 (H3K4me3); H3 'Lys-4' methylation represents a specific tag for epigenetic transcriptional activation and is required for efficient elongation of transcription but not for transcription initiation. Methylates only a limited fraction of nucleosomes of target genes (e.g. FLC, NAP, XTH33 and WRKY70). Necessary for WDR5A occupancy at WRKY70 and LTP7 genes. Required to maintain the active state of class A (AP1 and AP2), class B (PI and AP3) and class C (AG, AGAMOUS) floral homeotic genes at early stages of flower development. Together with CLF, modulates AG nucleosome methylation statement. Involved in epigenetic regulation (e.g. H3K4me3) of the floral repressors FLC, FT and SOC1 to prevent the transition from vegetative to reproductive development, independently of the photoperiod; binds the active FLC locus before flowering, but this interaction is released upon the transition to flowering. Regulates floral organ identity and flowering transition. Functions as a receptor for the lipid messenger phosphatidylinositol 5-phosphate (PI5P), which negatively regulates its transcriptional activation activity. Exhibits histone methylase activity and subsequent transcriptional regulation on WRKY70 gene, and, to a lower extent on secondary defense-response targets salicylic acid (SA)-responsive gene PR1 and jasmonic acid (JA)-responsive gene THI2.1. Involved in response to dehydration stress-response in both abscisic acid (ABA)-dependent and ABA-independent pathways; this includes specific genes (e.g. COR15A, ADH1, CBF4, RD29A, RD29B, RD26, ABF3, NCED3 and ABA3) epigenetic regulation (e.g. H3K4me3 and Pol II recruitment) to promote their transcription and influence ABA production. Implicated in stomatal closure regulation. Indirect repressor of XTH genes (XTH33). Necessary for the phosphorylation of Pol II NRPB1 (e.g. Ser5P and Ser2P) at the promoters of target genes, thus regulating both early and late stages of transcription. Controls root growth and architecture by regulating the timing of root development, stem cell niche maintenance (e.g. quiescent center (QC)), and cell patterning during primary and lateral root development. Modulates cell cycle duration, cell production, and the transition from cell proliferation in the root apical meristem (RAM) to cell elongation. In terms of biological role, trimethylates A4/EF1A post-translationally at Lys-396. Required for actin cytoskeleton organization. The sequence is that of Histone H3-lysine(4) N-trimethyltransferase ATX1 from Arabidopsis thaliana (Mouse-ear cress).